Reading from the N-terminus, the 31-residue chain is Maltose/maltodextrin import ATP-binding protein MalK (31 aa).

This sequence belongs to the ABC transporter superfamily. Maltooligosaccharide importer (TC 3.A.1.1.1) family. The complex is composed of two ATP-binding proteins (MalK), two transmembrane proteins (MalG and MalK) and a solute-binding protein (MalE).

Its subcellular location is the cell inner membrane. It carries out the reaction D-maltose(out) + ATP + H2O = D-maltose(in) + ADP + phosphate + H(+). Functionally, part of the ABC transporter complex MalEFGK involved in maltose/maltodextrin import. Responsible for energy coupling to the transport system. This Photorhabdus luminescens (Xenorhabdus luminescens) protein is Maltose/maltodextrin import ATP-binding protein MalK.